The following is a 227-amino-acid chain: MKALYLGHAAVLLQTGERNILIDPFINENPSCPIKVQDLPKIHYILVTHGHGDHLGDTVEIAKRDSSTVITNFELSSLISRHGISTHPMHIGGRYTFEFGSVKLTPALHGSSISEGDTPVYAGNPCGFLIEIHDKKIYHAGDTGLTKDMELLRRENIDLAFLPIGGNFVMDLWDAVEAVKMIYPEIVVPIHYNTWEVIKSDPAIFQKEVEKLGLKCRALKPGESIEL.

The protein belongs to the UPF0173 family.

The protein is UPF0173 metal-dependent hydrolase Tlet_1100 of Pseudothermotoga lettingae (strain ATCC BAA-301 / DSM 14385 / NBRC 107922 / TMO) (Thermotoga lettingae).